The sequence spans 390 residues: GTPase Obg (390 aa).

Residues 1-159 enclose the Obg domain; it reads MKFVDEASIL…RELLLELMLL (159 aa). The disordered stretch occupies residues 127–147; sequence NTRFKSSVNRTPRQKTNGTPG. The segment covering 129–145 has biased composition (polar residues); it reads RFKSSVNRTPRQKTNGT. The OBG-type G domain maps to 160-333; the sequence is ADVGMLGMPN…LCWDVMTFII (174 aa). GTP-binding positions include 166 to 173, 191 to 195, 213 to 216, 283 to 286, and 314 to 316; these read GMPNAGKS, FTTLV, DIPG, NKID, and SAA. The Mg(2+) site is built by Ser-173 and Thr-193.

Belongs to the TRAFAC class OBG-HflX-like GTPase superfamily. OBG GTPase family. As to quaternary structure, monomer. Mg(2+) serves as cofactor.

Its subcellular location is the cytoplasm. Its function is as follows. An essential GTPase which binds GTP, GDP and possibly (p)ppGpp with moderate affinity, with high nucleotide exchange rates and a fairly low GTP hydrolysis rate. Plays a role in control of the cell cycle, stress response, ribosome biogenesis and in those bacteria that undergo differentiation, in morphogenesis control. This chain is GTPase Obg, found in Shigella dysenteriae serotype 1 (strain Sd197).